A 610-amino-acid polypeptide reads, in one-letter code: Pyruvate decarboxylase 1 (610 aa).

Residues D72 and H159 each coordinate substrate. The segment at 437 to 519 is thiamine pyrophosphate binding; that stretch reads DSWFNCQKLR…FLINNGGYTI (83 aa). 3 residues coordinate Mg(2+): D487, N514, and G516. E520 is a binding site for substrate.

Belongs to the TPP enzyme family. As to quaternary structure, homotetramer. Requires a metal cation as cofactor. It depends on thiamine diphosphate as a cofactor.

The enzyme catalyses a 2-oxocarboxylate + H(+) = an aldehyde + CO2. This chain is Pyruvate decarboxylase 1 (PDC1), found in Zea mays (Maize).